We begin with the raw amino-acid sequence, 366 residues long: NADH-quinone oxidoreductase subunit D (366 aa).

It belongs to the complex I 49 kDa subunit family. As to quaternary structure, NDH-1 is composed of 14 different subunits. Subunits NuoB, C, D, E, F, and G constitute the peripheral sector of the complex.

Its subcellular location is the cell membrane. The catalysed reaction is a quinone + NADH + 5 H(+)(in) = a quinol + NAD(+) + 4 H(+)(out). In terms of biological role, NDH-1 shuttles electrons from NADH, via FMN and iron-sulfur (Fe-S) centers, to quinones in the respiratory chain. The immediate electron acceptor for the enzyme in this species is believed to be a menaquinone. Couples the redox reaction to proton translocation (for every two electrons transferred, four hydrogen ions are translocated across the cytoplasmic membrane), and thus conserves the redox energy in a proton gradient. The protein is NADH-quinone oxidoreductase subunit D of Bacillus anthracis.